The primary structure comprises 302 residues: Methionyl-tRNA formyltransferase (302 aa).

Residue 108-111 (SLLP) participates in (6S)-5,6,7,8-tetrahydrofolate binding.

The protein belongs to the Fmt family.

The catalysed reaction is L-methionyl-tRNA(fMet) + (6R)-10-formyltetrahydrofolate = N-formyl-L-methionyl-tRNA(fMet) + (6S)-5,6,7,8-tetrahydrofolate + H(+). Functionally, attaches a formyl group to the free amino group of methionyl-tRNA(fMet). The formyl group appears to play a dual role in the initiator identity of N-formylmethionyl-tRNA by promoting its recognition by IF2 and preventing the misappropriation of this tRNA by the elongation apparatus. The polypeptide is Methionyl-tRNA formyltransferase (Cereibacter sphaeroides (strain ATCC 17025 / ATH 2.4.3) (Rhodobacter sphaeroides)).